A 78-amino-acid polypeptide reads, in one-letter code: UPF0270 protein PC1_3850 (78 aa).

The protein belongs to the UPF0270 family.

The sequence is that of UPF0270 protein PC1_3850 from Pectobacterium carotovorum subsp. carotovorum (strain PC1).